A 621-amino-acid polypeptide reads, in one-letter code: F-box only protein 21 (621 aa).

Positions 28–77 (SCLVNLPGEVLEYILCCGSLTAADIGRVSSTCRRLRELCQSSGKVWKEQF) constitute an F-box domain.

As to quaternary structure, interacts with SKP1 and CUL1.

Its function is as follows. Substrate-recognition component of the SCF (SKP1-CUL1-F-box protein)-type E3 ubiquitin ligase complex. The polypeptide is F-box only protein 21 (FBXO21) (Pongo abelii (Sumatran orangutan)).